The following is a 133-amino-acid chain: Magnetosome protein MamC (133 aa).

Over 1–5 (MAAFN) the chain is Cytoplasmic. A helical membrane pass occupies residues 6-26 (LALYLSKSIPGVGVLGGVIGG). Residues 27–67 (SAALAKNLKAKQRGEITTEEAVIDTGKEALGAGLATTVSAY) are Lumenal-facing. The segment at 37–57 (KQRGEITTEEAVIDTGKEALG) is magnetite interacting component (MIC) binds magnetite. A helical membrane pass occupies residues 68 to 88 (AAGVVGGGLVVSLGTAFAVAV). Topologically, residues 89 to 133 (AGKYAWDYGMEQMEAKLQEKKHQEQGGQTYGDNPDPFDPQELETP) are cytoplasmic. The segment at 105-133 (LQEKKHQEQGGQTYGDNPDPFDPQELETP) is disordered.

It belongs to the magnetosome MamC family. As to quaternary structure, probably interacts with MamA.

Its subcellular location is the magnetosome membrane. In terms of biological role, probably helps control the size of magnetite crystals; in vitro synthesis of magnetite yields larger and more well-developed magnetite crystals in the presence of purified MamC. Binds Fe(3+). The lumenal domain probably binds magnetite crystals, affecting crystal size and shape. Purified MamC self-assembles into micelles in the presence of ferric chloride hexahydrate (FeCl(3).6H(2)O); both oxygen and iron are present in the proteinaceous micelles. Whether this is relevant in vivo is unknown. This is Magnetosome protein MamC from Magnetococcus marinus (strain ATCC BAA-1437 / JCM 17883 / MC-1).